The sequence spans 258 residues: Indole-3-glycerol phosphate synthase (258 aa).

This sequence belongs to the TrpC family.

The enzyme catalyses 1-(2-carboxyphenylamino)-1-deoxy-D-ribulose 5-phosphate + H(+) = (1S,2R)-1-C-(indol-3-yl)glycerol 3-phosphate + CO2 + H2O. The protein operates within amino-acid biosynthesis; L-tryptophan biosynthesis; L-tryptophan from chorismate: step 4/5. This Geobacillus kaustophilus (strain HTA426) protein is Indole-3-glycerol phosphate synthase.